Here is a 407-residue protein sequence, read N- to C-terminus: Histone acetyltransferase mst2 (407 aa).

The MYST-type HAT domain occupies Pro-98 to Pro-372. The C2HC MYST-type zinc-finger motif lies at Leu-131 to Trp-156. Lys-198 is subject to N6-acetyllysine; by autocatalysis. Residues Ile-241 to Thr-243, Thr-243, and Gln-248 to Val-254 each bind acetyl-CoA. Residue Glu-274 is the Proton donor/acceptor of the active site. Acetyl-CoA is bound by residues Ser-278 and Ser-287.

The protein belongs to the MYST (SAS/MOZ) family. As to quaternary structure, component of the mst2 complex composed of at least eaf6, mst2, nto1, pdp3, ptf1, ptf2 and tfg3. In terms of processing, autoacetylation at Lys-198 is required for proper function.

The protein localises to the cytoplasm. The protein resides in the nucleus. The catalysed reaction is L-lysyl-[protein] + acetyl-CoA = N(6)-acetyl-L-lysyl-[protein] + CoA + H(+). Its function is as follows. Component of the mst2 complex which is a highly specific H3 lysine 14 (H3K14) acetyltransferase that functions together with gcn5 to regulate global levels of H3K14 acetylation (H3K14ac), critical for DNA damage checkpoint activation. Negatively regulates telomere silencing. Telomere silencing is increased due to histone hypoacetylation and/or an increase in the ratio of methylated histones to acetylated histones. Telomeric histone acetylation contributes to normal meiotic progression. This is Histone acetyltransferase mst2 (mst2) from Schizosaccharomyces pombe (strain 972 / ATCC 24843) (Fission yeast).